Here is an 886-residue protein sequence, read N- to C-terminus: Leucine-rich repeat-containing protein sog2 (886 aa).

LRR repeat units lie at residues 28-49 (NALTLDLSHLNLRELPYEQLER), 53-74 (RIARLALGHNFIKSIGPEILKF), 76-97 (RLRYLNIRSNVLREFPESLCRL), 99-120 (SLEILDISRNKIKQLPESFGAL), 122-143 (NLKVLSISKNRLFELPTYIAHM), and 145-166 (NLEILKIENNHIVFPPPHIANN). Disordered regions lie at residues 236–288 (SPGM…THPP), 301–364 (SPRQ…ASPI), 394–431 (PTQLSASAKTSAISLPEVAKKERNRSNSTNDDYSSTRL), and 455–483 (RIFAQDPHPSPRLKKEETHENGSNLTNDS). Polar residues predominate over residues 243–277 (VTPSPHSHSPAGHQQSTPKSTLSKTNENSEGTLYD). At serine 301 the chain carries Phosphoserine. 3 stretches are compositionally biased toward polar residues: residues 312–347 (SLATGLNSPSVSKPPSSATGPLYHSPQSSLTNSSVA), 394–406 (PTQLSASAKTSAI), and 419–431 (SNSTNDDYSSTRL). At serine 464 the chain carries Phosphoserine.

It is found in the cytoplasm. Its subcellular location is the nucleus. The protein is Leucine-rich repeat-containing protein sog2 of Schizosaccharomyces pombe (strain 972 / ATCC 24843) (Fission yeast).